The following is a 338-amino-acid chain: Heat-inducible transcription repressor HrcA (338 aa).

This sequence belongs to the HrcA family.

In terms of biological role, negative regulator of class I heat shock genes (grpE-dnaK-dnaJ and groELS operons). Prevents heat-shock induction of these operons. The polypeptide is Heat-inducible transcription repressor HrcA (Bacillus cereus (strain AH820)).